Here is a 23-residue protein sequence, read N- to C-terminus: Nephrotoxin PsTX-115 (23 aa).

Its subcellular location is the secreted. The protein resides in the nematocyst. Its function is as follows. Nephrotoxin. When injected intravenously in rats, causes severe destructive glomerular changes. At 24 hours post-injection partial disruption of the glomerular basement membrane, massive thrombus formation in glomerular capillaries, severe mesangiolysis and infiltrating cells were observed in the majority of glomeruli. This is Nephrotoxin PsTX-115 from Phyllodiscus semoni (Night anemone).